Reading from the N-terminus, the 1434-residue chain is DNA-directed RNA polymerase subunit beta (1434 aa).

Belongs to the RNA polymerase beta chain family. In terms of assembly, the RNAP catalytic core consists of 2 alpha, 1 beta, 1 beta' and 1 omega subunit. When a sigma factor is associated with the core the holoenzyme is formed, which can initiate transcription.

It carries out the reaction RNA(n) + a ribonucleoside 5'-triphosphate = RNA(n+1) + diphosphate. Its function is as follows. DNA-dependent RNA polymerase catalyzes the transcription of DNA into RNA using the four ribonucleoside triphosphates as substrates. The polypeptide is DNA-directed RNA polymerase subunit beta (Ureaplasma parvum serovar 3 (strain ATCC 27815 / 27 / NCTC 11736)).